The sequence spans 204 residues: Ribonuclease HII (204 aa).

The RNase H type-2 domain occupies 1 to 197 (MILGIDEAGR…KNCILNPKLL (197 aa)). 3 residues coordinate a divalent metal cation: Asp6, Glu7, and Asp103.

Belongs to the RNase HII family. Requires Mn(2+) as cofactor. Mg(2+) serves as cofactor.

The protein localises to the cytoplasm. The catalysed reaction is Endonucleolytic cleavage to 5'-phosphomonoester.. In terms of biological role, endonuclease that specifically degrades the RNA of RNA-DNA hybrids. The protein is Ribonuclease HII of Helicobacter pylori (strain P12).